Reading from the N-terminus, the 421-residue chain is UDP-N-acetylglucosamine 1-carboxyvinyltransferase (421 aa).

Phosphoenolpyruvate is bound at residue 22-23 (KN). Arginine 94 contributes to the UDP-N-acetyl-alpha-D-glucosamine binding site. The active-site Proton donor is cysteine 118. A 2-(S-cysteinyl)pyruvic acid O-phosphothioketal modification is found at cysteine 118. UDP-N-acetyl-alpha-D-glucosamine contacts are provided by residues 163–166 (KVSV), aspartate 308, and isoleucine 330.

This sequence belongs to the EPSP synthase family. MurA subfamily.

The protein localises to the cytoplasm. The enzyme catalyses phosphoenolpyruvate + UDP-N-acetyl-alpha-D-glucosamine = UDP-N-acetyl-3-O-(1-carboxyvinyl)-alpha-D-glucosamine + phosphate. Its pathway is cell wall biogenesis; peptidoglycan biosynthesis. Cell wall formation. Adds enolpyruvyl to UDP-N-acetylglucosamine. The chain is UDP-N-acetylglucosamine 1-carboxyvinyltransferase from Orientia tsutsugamushi (strain Ikeda) (Rickettsia tsutsugamushi).